A 228-amino-acid polypeptide reads, in one-letter code: NAD(P)H-hydrate epimerase (228 aa).

Positions 9–209 constitute a YjeF N-terminal domain; that stretch reads VRAVERLAHR…LLGLTPAFLA (201 aa). (6S)-NADPHX is bound at residue 53–57; the sequence is NNGGD. Positions 54 and 115 each coordinate K(+). Residues 119-125 and aspartate 148 contribute to the (6S)-NADPHX site; that span reads GIGLARP. Residue serine 151 participates in K(+) binding.

This sequence belongs to the NnrE/AIBP family. K(+) is required as a cofactor.

It catalyses the reaction (6R)-NADHX = (6S)-NADHX. The enzyme catalyses (6R)-NADPHX = (6S)-NADPHX. Catalyzes the epimerization of the S- and R-forms of NAD(P)HX, a damaged form of NAD(P)H that is a result of enzymatic or heat-dependent hydration. This is a prerequisite for the S-specific NAD(P)H-hydrate dehydratase to allow the repair of both epimers of NAD(P)HX. The chain is NAD(P)H-hydrate epimerase from Bordetella parapertussis (strain 12822 / ATCC BAA-587 / NCTC 13253).